We begin with the raw amino-acid sequence, 624 residues long: Phosphoenolpyruvate carboxykinase (ATP) 1 (624 aa).

Residues 1–22 (MASPNGGVTTYDYDDSDSAAPV) are disordered. 322-329 (GLSGTGKT) is an ATP binding site.

Belongs to the phosphoenolpyruvate carboxykinase (ATP) family. Homohexamer. Green leaves but not in roots or etiolated shoots.

The protein localises to the cytoplasm. The enzyme catalyses oxaloacetate + ATP = phosphoenolpyruvate + ADP + CO2. It participates in carbohydrate biosynthesis; gluconeogenesis. The chain is Phosphoenolpyruvate carboxykinase (ATP) 1 (PCK1) from Urochloa panicoides (Panic liverseed grass).